The sequence spans 230 residues: Small ribosomal subunit protein uS7m (230 aa).

Belongs to the universal ribosomal protein uS7 family. As to quaternary structure, part of the small ribosomal subunit.

Its subcellular location is the mitochondrion. Functionally, one of the primary rRNA binding proteins, it binds directly to 18S rRNA where it nucleates assembly of the head domain of the small subunit. This chain is Small ribosomal subunit protein uS7m (RPS7), found in Marchantia polymorpha (Common liverwort).